Consider the following 556-residue polypeptide: 2-isopropylmalate synthase (556 aa).

One can recognise a Pyruvate carboxyltransferase domain in the interval 33-307 (PIWCSSDLRD…DPELDFSDID (275 aa)). Asp-42, His-246, His-248, and Asn-282 together coordinate Mg(2+). The interval 439–556 (ANTPYALISH…SLSQTQAKAA (118 aa)) is regulatory domain.

It belongs to the alpha-IPM synthase/homocitrate synthase family. LeuA type 2 subfamily. In terms of assembly, homodimer. The cofactor is Mg(2+).

Its subcellular location is the cytoplasm. The enzyme catalyses 3-methyl-2-oxobutanoate + acetyl-CoA + H2O = (2S)-2-isopropylmalate + CoA + H(+). Its pathway is amino-acid biosynthesis; L-leucine biosynthesis; L-leucine from 3-methyl-2-oxobutanoate: step 1/4. Functionally, catalyzes the condensation of the acetyl group of acetyl-CoA with 3-methyl-2-oxobutanoate (2-ketoisovalerate) to form 3-carboxy-3-hydroxy-4-methylpentanoate (2-isopropylmalate). This chain is 2-isopropylmalate synthase, found in Pseudomonas savastanoi pv. phaseolicola (strain 1448A / Race 6) (Pseudomonas syringae pv. phaseolicola (strain 1448A / Race 6)).